The following is a 179-amino-acid chain: Shikimate kinase (179 aa).

Residue 15–20 participates in ATP binding; it reads GAGKTS. T19 contacts Mg(2+). Substrate-binding residues include D37, R61, and G83. R122 provides a ligand contact to ATP. R142 is a binding site for substrate.

This sequence belongs to the shikimate kinase family. In terms of assembly, monomer. Mg(2+) serves as cofactor.

It is found in the cytoplasm. It carries out the reaction shikimate + ATP = 3-phosphoshikimate + ADP + H(+). It functions in the pathway metabolic intermediate biosynthesis; chorismate biosynthesis; chorismate from D-erythrose 4-phosphate and phosphoenolpyruvate: step 5/7. Its function is as follows. Catalyzes the specific phosphorylation of the 3-hydroxyl group of shikimic acid using ATP as a cosubstrate. The protein is Shikimate kinase of Coxiella burnetii (strain RSA 331 / Henzerling II).